The chain runs to 315 residues: DNA-directed RNA polymerase subunit alpha (315 aa).

Residues 1 to 228 (MLEIEKPKIE…EHFKLFMTLT (228 aa)) are alpha N-terminal domain (alpha-NTD). Residues 245–315 (KEKVLEMTIE…LGLGLKKSDE (71 aa)) form an alpha C-terminal domain (alpha-CTD) region.

It belongs to the RNA polymerase alpha chain family. As to quaternary structure, homodimer. The RNAP catalytic core consists of 2 alpha, 1 beta, 1 beta' and 1 omega subunit. When a sigma factor is associated with the core the holoenzyme is formed, which can initiate transcription.

The enzyme catalyses RNA(n) + a ribonucleoside 5'-triphosphate = RNA(n+1) + diphosphate. DNA-dependent RNA polymerase catalyzes the transcription of DNA into RNA using the four ribonucleoside triphosphates as substrates. The protein is DNA-directed RNA polymerase subunit alpha of Clostridium novyi (strain NT).